A 380-amino-acid chain; its full sequence is Cytochrome b (380 aa).

The next 4 membrane-spanning stretches (helical) occupy residues 33-53 (FGSL…FLAM), 77-98 (WLIR…YLHI), 113-133 (WNVG…GYVL), and 178-198 (FFAF…LHLL). The heme b site is built by His-83 and His-97. Heme b contacts are provided by His-182 and His-196. His-201 contacts a ubiquinone. The next 4 helical transmembrane spans lie at 226–246 (YKDL…ALFS), 288–308 (LGGV…PILH), 320–340 (FSQI…WIGG), and 347–367 (YIII…VFFP).

It belongs to the cytochrome b family. The cytochrome bc1 complex contains 3 respiratory subunits (MT-CYB, CYC1 and UQCRFS1), 2 core proteins (UQCRC1 and UQCRC2) and probably 6 low-molecular weight proteins. Heme b serves as cofactor.

The protein resides in the mitochondrion inner membrane. In terms of biological role, component of the ubiquinol-cytochrome c reductase complex (complex III or cytochrome b-c1 complex) that is part of the mitochondrial respiratory chain. The b-c1 complex mediates electron transfer from ubiquinol to cytochrome c. Contributes to the generation of a proton gradient across the mitochondrial membrane that is then used for ATP synthesis. The chain is Cytochrome b (mt-cyb) from Apogon semilineatus (Half-lined cardinal).